We begin with the raw amino-acid sequence, 402 residues long: Sensor protein kinase FleS (402 aa).

The region spanning 188–393 (SLAHQIRTPL…CATLILPLIP (206 aa)) is the Histidine kinase domain. A Phosphohistidine; by autocatalysis modification is found at H191.

It catalyses the reaction ATP + protein L-histidine = ADP + protein N-phospho-L-histidine.. Member of the two-component regulatory system FleS/FleR that regulates the expression of multiple genes involved in flagellar synthesis, adhesion, swarming, motility and antibiotic resistance. May function as a membrane-associated protein kinase that phosphorylates FleR in response to environmental signals leading to activation of specific gene promoters. The chain is Sensor protein kinase FleS (fleS) from Pseudomonas aeruginosa (strain ATCC 15692 / DSM 22644 / CIP 104116 / JCM 14847 / LMG 12228 / 1C / PRS 101 / PAO1).